Consider the following 434-residue polypeptide: Eukaryotic translation initiation factor 3 subunit E-1 (434 aa).

The region spanning 219–392 (FFNHPKGRDL…GHVVMGTQPL (174 aa)) is the PCI domain.

The protein belongs to the eIF-3 subunit E family. As to quaternary structure, component of the eukaryotic translation initiation factor 3 (eIF-3) complex. The eIF-3 complex interacts with pix. Interacts with mxt.

It localises to the cytoplasm. Functionally, component of the eukaryotic translation initiation factor 3 (eIF-3) complex, which is involved in protein synthesis of a specialized repertoire of mRNAs and, together with other initiation factors, stimulates binding of mRNA and methionyl-tRNAi to the 40S ribosome. The eIF-3 complex specifically targets and initiates translation of a subset of mRNAs involved in cell proliferation. The sequence is that of Eukaryotic translation initiation factor 3 subunit E-1 (eIF3-S6-1) from Drosophila willistoni (Fruit fly).